A 383-amino-acid chain; its full sequence is Acetylornithine deacetylase (383 aa).

Position 80 (H80) interacts with Zn(2+). The active site involves D82. Zn(2+) is bound at residue D112. The active site involves E144. Residues E145, E169, and H355 each contribute to the Zn(2+) site.

The protein belongs to the peptidase M20A family. ArgE subfamily. As to quaternary structure, homodimer. The cofactor is Zn(2+). Co(2+) serves as cofactor. Requires glutathione as cofactor.

It is found in the cytoplasm. The enzyme catalyses N(2)-acetyl-L-ornithine + H2O = L-ornithine + acetate. The protein operates within amino-acid biosynthesis; L-arginine biosynthesis; L-ornithine from N(2)-acetyl-L-ornithine (linear): step 1/1. Functionally, catalyzes the hydrolysis of the amide bond of N(2)-acetylated L-amino acids. Cleaves the acetyl group from N-acetyl-L-ornithine to form L-ornithine, an intermediate in L-arginine biosynthesis pathway, and a branchpoint in the synthesis of polyamines. This Salmonella choleraesuis (strain SC-B67) protein is Acetylornithine deacetylase.